A 249-amino-acid polypeptide reads, in one-letter code: Carboxy-S-adenosyl-L-methionine synthase (249 aa).

S-adenosyl-L-methionine-binding positions include Tyr-39, Gly-64 to Ser-66, Asp-117 to Ile-118, Asn-132, and Arg-199.

The protein belongs to the class I-like SAM-binding methyltransferase superfamily. Cx-SAM synthase family. Homodimer.

It catalyses the reaction prephenate + S-adenosyl-L-methionine = carboxy-S-adenosyl-L-methionine + 3-phenylpyruvate + H2O. Its function is as follows. Catalyzes the conversion of S-adenosyl-L-methionine (SAM) to carboxy-S-adenosyl-L-methionine (Cx-SAM). The sequence is that of Carboxy-S-adenosyl-L-methionine synthase from Aeromonas hydrophila subsp. hydrophila (strain ATCC 7966 / DSM 30187 / BCRC 13018 / CCUG 14551 / JCM 1027 / KCTC 2358 / NCIMB 9240 / NCTC 8049).